Here is a 443-residue protein sequence, read N- to C-terminus: Threonine/serine transporter TdcC (443 aa).

A run of 11 helical transmembrane segments spans residues 24-44 (WVLG…PISA), 45-65 (GIGG…IAFF), 95-115 (VGGV…LWIY), 140-160 (VVAL…KDLM), 163-183 (VMGY…LSLI), 207-227 (ILVT…FSPI), 259-279 (ASVL…FTLS), 319-339 (ASII…LGTL), 363-383 (LNMI…YINP), 385-405 (ILDL…CLLP), and 423-443 (SNYF…YQLM).

It belongs to the amino acid/polyamine transporter 2 family. SdaC/TdcC subfamily.

It is found in the cell inner membrane. It carries out the reaction L-threonine(in) + H(+)(in) = L-threonine(out) + H(+)(out). It catalyses the reaction L-serine(in) + H(+)(in) = L-serine(out) + H(+)(out). Functionally, involved in the import of threonine and serine into the cell, with the concomitant import of a proton (symport system). In Edwardsiella piscicida, this protein is Threonine/serine transporter TdcC.